Here is a 351-residue protein sequence, read N- to C-terminus: tRNA pseudouridine synthase D (351 aa).

Residue Asp-81 is the Nucleophile of the active site. The TRUD domain maps to 158-304 (GVPNYFGSQR…MRHERRAIEL (147 aa)).

This sequence belongs to the pseudouridine synthase TruD family.

It carries out the reaction uridine(13) in tRNA = pseudouridine(13) in tRNA. Responsible for synthesis of pseudouridine from uracil-13 in transfer RNAs. The chain is tRNA pseudouridine synthase D from Aliivibrio fischeri (strain MJ11) (Vibrio fischeri).